Here is a 170-residue protein sequence, read N- to C-terminus: Nucleoside-triphosphatase THEP1 (170 aa).

Residues Gly-7–Thr-14 and Ile-98–Gly-105 each bind ATP.

This sequence belongs to the THEP1 NTPase family.

The enzyme catalyses a ribonucleoside 5'-triphosphate + H2O = a ribonucleoside 5'-diphosphate + phosphate + H(+). In terms of biological role, has nucleotide phosphatase activity towards ATP, GTP, CTP, TTP and UTP. May hydrolyze nucleoside diphosphates with lower efficiency. The protein is Nucleoside-triphosphatase THEP1 of Methanocaldococcus jannaschii (strain ATCC 43067 / DSM 2661 / JAL-1 / JCM 10045 / NBRC 100440) (Methanococcus jannaschii).